Here is a 72-residue protein sequence, read N- to C-terminus: Translation initiation factor IF-1 (72 aa).

In terms of domain architecture, S1-like spans 1–72; that stretch reads MAKQDVIELE…SRGRITYRYK (72 aa).

This sequence belongs to the IF-1 family. In terms of assembly, component of the 30S ribosomal translation pre-initiation complex which assembles on the 30S ribosome in the order IF-2 and IF-3, IF-1 and N-formylmethionyl-tRNA(fMet); mRNA recruitment can occur at any time during PIC assembly.

It is found in the cytoplasm. One of the essential components for the initiation of protein synthesis. Stabilizes the binding of IF-2 and IF-3 on the 30S subunit to which N-formylmethionyl-tRNA(fMet) subsequently binds. Helps modulate mRNA selection, yielding the 30S pre-initiation complex (PIC). Upon addition of the 50S ribosomal subunit IF-1, IF-2 and IF-3 are released leaving the mature 70S translation initiation complex. In Staphylococcus epidermidis (strain ATCC 35984 / DSM 28319 / BCRC 17069 / CCUG 31568 / BM 3577 / RP62A), this protein is Translation initiation factor IF-1.